The primary structure comprises 66 residues: Toxin Cll1 (66 aa).

The LCN-type CS-alpha/beta domain occupies 1–66 (KEGYLVNKST…TYPLPNKSCS (66 aa)). Cystine bridges form between Cys12/Cys65, Cys16/Cys41, Cys25/Cys46, and Cys29/Cys48.

The protein belongs to the long (4 C-C) scorpion toxin superfamily. Sodium channel inhibitor family. Beta subfamily. In terms of tissue distribution, expressed by the venom gland.

It localises to the secreted. Beta toxin that binds site-4 of sodium channels (Nav) and reduces peak current (observed on Nav1.1/SCN1A, Nav1.2/SCN2A, Nav1.3/SCN3A, Nav1.4/SCN5A, Nav1.5/SCN4A, and Nav1.6/SCN8A (IC(50)=44.9 nM)), shifts the voltage of activation toward more negative potentials (observed on Nav1.6, Nav1.1 (weak), Nav1.2 (weak), and Nav1.7 (weak)), and induces resurgent currents at negative voltages following brief and strong depolarizations (observed on Nav1.6, Nav1.1 (weak), Nav1.2 (weak), and Nav1.4 (weak)). This toxin is only active on crustaceans. The polypeptide is Toxin Cll1 (Centruroides limpidus (Mexican scorpion)).